Reading from the N-terminus, the 633-residue chain is Proline-rich protein LAS17 (633 aa).

Residues 16–127 (LPKASNKIID…KRVQKRERYA (112 aa)) form the WH1 domain. Disordered regions lie at residues 145-545 (REEQ…TTGD) and 563-606 (ALRK…PASL). Residues 192–215 (AETFDSDQTSSFSDINSTTASAPT) show a composition bias toward low complexity. Composition is skewed to pro residues over residues 216–225 (TPAPALPPAS) and 238–256 (SLPP…PQHN). 2 stretches are compositionally biased toward low complexity: residues 257–269 (SPPQ…QPQS) and 307–322 (PQQN…RNNR). Threonine 334 is subject to Phosphothreonine. A Phosphoserine modification is found at serine 337. Residues 342–357 (PAPPPPPRRGPAPPPP) are compositionally biased toward pro residues. Polar residues-rich tracts occupy residues 363 to 376 (TSNT…NSLL), 399 to 414 (NVTM…NSNR), and 454 to 465 (PQNTQAPSQATN). Over residues 479–488 (QSQIPQSAPS) the composition is skewed to low complexity. A WH2 domain is found at 547–567 (GRDALLASIRGAGGIGALRKV). Serine 588 carries the post-translational modification Phosphoserine.

Interacts with KRE6, LSB3, LSB5 and YSC84.

The polypeptide is Proline-rich protein LAS17 (LAS17) (Saccharomyces cerevisiae (strain ATCC 204508 / S288c) (Baker's yeast)).